A 580-amino-acid polypeptide reads, in one-letter code: Putative ankyrin repeat protein L63 (580 aa).

14 ANK repeats span residues 81-110 (SLNR…DFRI), 111-140 (DNDY…NIGA), 141-170 (NDNC…DINA), 172-200 (NNYP…DIRA), 202-230 (DDYV…VLNK), 314-339 (SLDD…LLGA), 340-369 (SERK…NIKC), 370-399 (GSNC…DINS), 400-429 (GNNY…NIRA), 431-459 (NDRA…NIRA), 461-489 (DDRA…DIKA), 490-519 (GDDY…NIKA), 521-549 (DDYA…DIRA), and 551-579 (NNYA…VINP).

This is Putative ankyrin repeat protein L63 from Acanthamoeba polyphaga (Amoeba).